The following is an 890-amino-acid chain: UPF0182 protein Ppro_2689 (890 aa).

The next 7 helical transmembrane spans lie at 6-26, 50-70, 102-122, 157-177, 200-220, 244-264, and 266-286; these read FILI…LLAF, AGSG…NLLL, LGIP…AMQW, TITA…VLVY, LAIL…LDCF, TYRI…IGLW, and GAWR…VIGI.

It belongs to the UPF0182 family.

It is found in the cell membrane. This Pelobacter propionicus (strain DSM 2379 / NBRC 103807 / OttBd1) protein is UPF0182 protein Ppro_2689.